Here is a 340-residue protein sequence, read N- to C-terminus: Tetraacyldisaccharide 4'-kinase (340 aa).

Residue 47 to 54 (SVGGTGKT) coordinates ATP.

It belongs to the LpxK family.

The enzyme catalyses a lipid A disaccharide + ATP = a lipid IVA + ADP + H(+). It participates in glycolipid biosynthesis; lipid IV(A) biosynthesis; lipid IV(A) from (3R)-3-hydroxytetradecanoyl-[acyl-carrier-protein] and UDP-N-acetyl-alpha-D-glucosamine: step 6/6. Transfers the gamma-phosphate of ATP to the 4'-position of a tetraacyldisaccharide 1-phosphate intermediate (termed DS-1-P) to form tetraacyldisaccharide 1,4'-bis-phosphate (lipid IVA). This chain is Tetraacyldisaccharide 4'-kinase, found in Flavobacterium johnsoniae (strain ATCC 17061 / DSM 2064 / JCM 8514 / BCRC 14874 / CCUG 350202 / NBRC 14942 / NCIMB 11054 / UW101) (Cytophaga johnsonae).